The following is a 224-amino-acid chain: BOS complex subunit TMEM147 (224 aa).

The helical transmembrane segment at 1–21 (MTLFHFGNCFALAYFPYFITY) threads the bilayer. Residues 22–34 (KCSGLSEYNAFWK) lie on the Cytoplasmic side of the membrane. The helical transmembrane segment at 35-58 (CVQAGVTYLFVQLCKMLFLATFFP) threads the bilayer. Topologically, residues 59–66 (TWEGGIYD) are lumenal. A helical membrane pass occupies residues 67-88 (FIGEFMKASVDVADLIGLNLVM). Over 89–98 (SRNAGKGEYK) the chain is Cytoplasmic. Residues 99–124 (IMVAALGWATAELIMSRCIPLWVGAR) traverse the membrane as a helical segment. The Lumenal segment spans residues 125 to 129 (GIEFD). Residues 130 to 155 (WKYIQMSIDSNISLVHYIVASAQVWM) form a helical membrane-spanning segment. The Cytoplasmic portion of the chain corresponds to 156–164 (ITRYDLYHT). The helical transmembrane segment at 165–187 (FRPAVLLLMFLSVYKAFVMETFV) threads the bilayer. Residues 188–194 (HLCSLGS) are Lumenal-facing. A helical membrane pass occupies residues 195-216 (WAALLARAVVTGLLALSTLALY). Residues 217–224 (VAVVNVHS) lie on the Cytoplasmic side of the membrane.

The protein belongs to the TMEM147 family. In terms of assembly, component of the back of Sec61 (BOS) complex, composed of NCLN/Nicalin, NOMO (NOMO1, NOMO2 or NOMO3) and TMEM147. The BOS complex is part of the multi-pass translocon (MPT) complex, composed of three subcomplexes, the GEL complex (composed of RAB5IF/OPTI and TMCO1), the BOS complex (composed of NCLN/Nicalin, NOMO and TMEM147) and the PAT complex (composed of WDR83OS/Asterix and CCDC47). The MPT complex associates with the SEC61 complex. Interacts with CHRM3, CHRM1 and AVPR2. Interacts with LBR; promoting LBR localization to the nucleus inner membrane. Interacts with DHCR7.

The protein resides in the endoplasmic reticulum membrane. The protein localises to the nucleus membrane. It is found in the cell membrane. Its function is as follows. Component of the multi-pass translocon (MPT) complex that mediates insertion of multi-pass membrane proteins into the lipid bilayer of membranes. The MPT complex takes over after the SEC61 complex: following membrane insertion of the first few transmembrane segments of proteins by the SEC61 complex, the MPT complex occludes the lateral gate of the SEC61 complex to promote insertion of subsequent transmembrane regions. Also acts as a negative regulator of CHRM3 function, most likely by interfering with its trafficking to the cell membrane. Negatively regulates CHRM3-mediated calcium mobilization and activation of RPS6KA1/p90RSK activity. Regulates LBR localization to the nucleus inner membrane. The sequence is that of BOS complex subunit TMEM147 from Homo sapiens (Human).